Reading from the N-terminus, the 137-residue chain is Large ribosomal subunit protein uL16 (137 aa).

Belongs to the universal ribosomal protein uL16 family. Part of the 50S ribosomal subunit.

Its function is as follows. Binds 23S rRNA and is also seen to make contacts with the A and possibly P site tRNAs. The chain is Large ribosomal subunit protein uL16 from Rhizobium johnstonii (strain DSM 114642 / LMG 32736 / 3841) (Rhizobium leguminosarum bv. viciae).